We begin with the raw amino-acid sequence, 906 residues long: Protein kintoun (906 aa).

The residue at position 376 (serine 376) is a Phosphoserine. Disordered stretches follow at residues 614–691 (QQQK…RKQR) and 793–906 (RKKN…DEDM). The segment covering 618 to 631 (KLNKKQRKRNKKQR) has biased composition (basic residues). Positions 639-655 (EELKAAQEELQLQHEKQ) are enriched in basic and acidic residues. The span at 793–808 (RKKNQKRRDCKLRAQQ) shows a compositional bias: basic residues. Serine 812 bears the Phosphoserine mark. Polar residues predominate over residues 837 to 850 (ANAQYFKQPNNNNG). Composition is skewed to basic and acidic residues over residues 851–865 (HDQD…HDSG) and 875–887 (NNEE…EADA). Residues 894-906 (EMDDDDEDEDEDM) show a composition bias toward acidic residues.

This sequence belongs to the PIH1 family. Kintoun subfamily. As to quaternary structure, interacts with Pp1alpha-96A, Pp1-87B, Pp1-13C and flw.

The protein resides in the cytoplasm. Its function is as follows. Required for cytoplasmic pre-assembly of axonemal dyneins, thereby playing a central role in motility in cilia and flagella. Involved in pre-assembly of dynein arm complexes in the cytoplasm before intraflagellar transport loads them for the ciliary compartment. This Drosophila virilis (Fruit fly) protein is Protein kintoun.